A 673-amino-acid chain; its full sequence is Outer spore wall assembly protein SHE10 (673 aa).

The N-terminal stretch at 1–24 is a signal peptide; the sequence is MRRVRGVGNLLVTILVVLIGFKQA. Positions 503 to 568 form a coiled coil; sequence ILRSQANIAF…LALEQGQGQE (66 aa). Disordered regions lie at residues 530–551 and 587–673; these read LEQERQIQEQKEREQQELAENE and TPLG…SQAN. Acidic residues-rich tracts occupy residues 593-605 and 612-629; these read DNTDYENALDDAD and GDSEDNFYDSYEGDEEDA. Residues 617-647 adopt a coiled-coil conformation; the sequence is NFYDSYEGDEEDASRELERLERESAERETLD. Residues 630 to 673 show a composition bias toward basic and acidic residues; the sequence is SRELERLERESAERETLDRLELGQRQKLQEEQHRDELHHSSQAN.

Belongs to the SHE10 family. Component of the mitochondria-localized RNase mitochondrial RNA-processing (RNase MRP) composed of one single RNA encoded by the NME1 gene and at least 31 proteins. Absent in the nucleus-localized RNase MRP (NuMRP).

The protein localises to the mitochondrion. Involved in spore wall assembly. May be a component of the mitochondrial RNase MRP (MtMRP), a ribonucleoprotein endoribonuclease involved in the cleaving RNA transcripts to generate primers for DNA replication in mitochondria. This chain is Outer spore wall assembly protein SHE10, found in Lachancea thermotolerans (strain ATCC 56472 / CBS 6340 / NRRL Y-8284) (Yeast).